The sequence spans 264 residues: MSDDVFTLGPAAFGSRLIMGTGGAPSLEVLERSLIASGTELTTVAMRRLDPTVQGSVLSVLERLSIRVLPNTAGCFTAGEAVLTARLAREALGTDWVKLEVVADERTLLPDPIELLDAAEVLVDDGFTVLPYTNDDPVLARKLEDVGCAAIMPLGSPIGSGLGIRNPHNFELIVERAGVPVILDAGAGTASDAAQAMELGCAAVMLASAVTRAQEPELMAGAMRHAVEGGRLAYRAGRIPRRHFAEASSPVAGRAVLDPERPAF.

Residue lysine 98 is the Schiff-base intermediate with DXP of the active site. 1-deoxy-D-xylulose 5-phosphate-binding positions include glycine 159, 185 to 186, and 207 to 208; these read AG and AS.

This sequence belongs to the ThiG family. In terms of assembly, homotetramer. Forms heterodimers with either ThiH or ThiS.

The protein resides in the cytoplasm. It catalyses the reaction [ThiS sulfur-carrier protein]-C-terminal-Gly-aminoethanethioate + 2-iminoacetate + 1-deoxy-D-xylulose 5-phosphate = [ThiS sulfur-carrier protein]-C-terminal Gly-Gly + 2-[(2R,5Z)-2-carboxy-4-methylthiazol-5(2H)-ylidene]ethyl phosphate + 2 H2O + H(+). It participates in cofactor biosynthesis; thiamine diphosphate biosynthesis. Catalyzes the rearrangement of 1-deoxy-D-xylulose 5-phosphate (DXP) to produce the thiazole phosphate moiety of thiamine. Sulfur is provided by the thiocarboxylate moiety of the carrier protein ThiS. In vitro, sulfur can be provided by H(2)S. The sequence is that of Thiazole synthase from Streptomyces griseus subsp. griseus (strain JCM 4626 / CBS 651.72 / NBRC 13350 / KCC S-0626 / ISP 5235).